The chain runs to 323 residues: NADH-ubiquinone oxidoreductase chain 1 (323 aa).

The next 8 helical transmembrane spans lie at 8-28 (LLNPLAVIIPILLAVAFLTLI), 74-94 (LLFITTPMLALTMALTLWLPL), 105-125 (LGMLFILAISSLTVYSILGSG), 150-170 (SLGLILLAMIIFAGGFTLTTF), 176-196 (TIWLLTPGWPLAAMWYISTLA), 227-247 (LFFLAEYANILLMNTLSTILF), 258-278 (ELTSINLMIKASALSMLFLWV), and 298-318 (FLPITLAMILWHTSLPIFTGS).

This sequence belongs to the complex I subunit 1 family.

The protein localises to the mitochondrion inner membrane. It carries out the reaction a ubiquinone + NADH + 5 H(+)(in) = a ubiquinol + NAD(+) + 4 H(+)(out). Its function is as follows. Core subunit of the mitochondrial membrane respiratory chain NADH dehydrogenase (Complex I) that is believed to belong to the minimal assembly required for catalysis. Complex I functions in the transfer of electrons from NADH to the respiratory chain. The immediate electron acceptor for the enzyme is believed to be ubiquinone. This is NADH-ubiquinone oxidoreductase chain 1 (MT-ND1) from Latimeria chalumnae (Coelacanth).